Consider the following 131-residue polypeptide: MGDYVVVLEAPIIVKDVETSEDAINVAVSKVTKALNKEKLDFVRVEIGYSQCPVCGAHFESAFVIGSVGLVGMYLTLKVYNAQSIEHAERIAKAVVGKALKKVPLKVFEIRELEHDGENGIEAEELNGEDV.

Belongs to the UPF0212 family.

The polypeptide is UPF0212 protein TK1194 (Thermococcus kodakarensis (strain ATCC BAA-918 / JCM 12380 / KOD1) (Pyrococcus kodakaraensis (strain KOD1))).